The primary structure comprises 595 residues: Leiomodin-1 (595 aa).

Disordered stretches follow at residues 1–322 and 467–568; these read MSKV…KVKN and DKQR…QEKN. Ser-12 is subject to Phosphoserine. Over residues 27–40 the composition is skewed to acidic residues; it reads EEMEELEKELDVVD. 8 stretches are compositionally biased toward basic and acidic residues: residues 72 to 105, 117 to 127, 134 to 193, 201 to 224, 232 to 251, 259 to 289, 467 to 476, and 484 to 493; these read CEKE…EDKG, QDSDVGKEPKK, FSRD…EKTG, SRDK…KLTA, RQED…KPEV, RDSR…REKQ, DKQRQKRLQE, and SGEKKDRLEV. Ser-85 bears the Phosphoserine mark. Ser-135 bears the Phosphoserine mark. A run of 8 repeats spans residues 165-180, 181-196, 197-212, 213-227, 228-243, 244-257, 258-273, and 274-288. Residues 165–288 form an 8 X approximate tandem repeats region; sequence AAVDRKEAGK…VREEGKTREK (124 aa). 2 stretches are compositionally biased toward pro residues: residues 503 to 513 and 527 to 538; these read SPKPSPQPSPK and AAPPPPPPPLAP. The interval 503–522 is 5 X 4 AA approximate tandem repeats; it reads SPKPSPQPSPKSAPKNSPKK. The residue at position 550 (Ser-550) is a Phosphoserine. The region spanning 569 to 588 is the WH2 domain; sequence SRDQLLAAIRSSNLKQLKKV.

Detected in smooth muscle, in stomach and uterus, blood vessel wall, and in slow fibers in extraocular muscle, urinary bladder and sternothyroid muscle (at protein level).

The protein localises to the cytoplasm. It is found in the myofibril. Its subcellular location is the sarcomere. It localises to the cytoskeleton. Required for proper contractility of visceral smooth muscle cells. Mediates nucleation of actin filaments. This Rattus norvegicus (Rat) protein is Leiomodin-1.